Reading from the N-terminus, the 52-residue chain is Phospholamban (52 aa).

M1 bears the N-acetylmethionine mark. Topologically, residues 1–31 (MEKVQYLTRSAIRRASTIEMPQQARQNLQNL) are cytoplasmic. S16 bears the Phosphoserine; by PKA mark. T17 carries the post-translational modification Phosphothreonine; by CaMK2. A helical transmembrane segment spans residues 32–52 (FINFCLILICLLLICIIVMLL). C36 carries the S-palmitoyl cysteine lipid modification.

Belongs to the phospholamban family. Homopentamer. Can also form heterooligomers with other sarcoplasmic/endoplasmic reticulum calcium ATPase (SERCA) regulators ARLN, ERLN, SLN and STRIT1/DWORF. Monomer. Interacts with HAX1. Interacts as a monomer with ATP2A2; the interaction decreases ATP2A2 Ca(2+) affinity. Interacts with VMP1; VMP1 competes with PLN and SLN to prevent them from forming an inhibitory complex with ATP2A2. Interacts with S100A1 in a Ca(2+)-dependent manner. Phosphorylated at Thr-17 by CaMK2, and in response to beta-adrenergic stimulation. Phosphorylation by DMPK may stimulate sarcoplasmic reticulum calcium uptake in cardiomyocytes. Phosphorylation by PKA abolishes the inhibition of ATP2A2-mediated calcium uptake. Post-translationally, palmitoylated by ZDHHC16, promoting formation of the homopentamer. In terms of processing, in elongated spermatids, proteolytically cleaved by SPPL2C which modulates intracellular Ca(2+) homeostasis. Expressed in testis (at protein level). In brain, expressed specifically in GABAergic GAD67+ neurons of the thalamic reticular nucleus where it colocalizes with ATP2A2/SERCA2 (at protein level). Expressed in the bladder and in the atria and ventricles of the heart.

It localises to the endoplasmic reticulum membrane. Its subcellular location is the sarcoplasmic reticulum membrane. The protein resides in the mitochondrion membrane. The protein localises to the membrane. In terms of biological role, reversibly inhibits the activity of ATP2A2/SERCA2 in cardiac sarcoplasmic reticulum by decreasing the apparent affinity of the ATPase for Ca(2+). Binds preferentially to the ATP-bound E1 conformational form of ATP2A2 which predominates at low Ca(2+) concentrations during the diastolic phase of the cardiac cycle. Inhibits ATP2A2 Ca(2+) affinity by disrupting its allosteric activation by ATP. Modulates the contractility of the heart muscle in response to physiological stimuli via its effects on ATP2A2. Modulates calcium re-uptake during muscle relaxation and plays an important role in calcium homeostasis in the heart muscle. The degree of ATP2A2 inhibition depends on the oligomeric state of PLN. ATP2A2 inhibition is alleviated by PLN phosphorylation. Also inhibits the activity of ATP2A3/SERCA3. Controls intracellular Ca(2+) levels in elongated spermatids and may play a role in germ cell differentiation. In the thalamic reticular nucleus of the brain, plays a role in the regulation of sleep patterns and executive functioning. The chain is Phospholamban from Mus musculus (Mouse).